Here is a 467-residue protein sequence, read N- to C-terminus: Venom prothrombin activator pseutarin-C catalytic subunit (467 aa).

The N-terminal stretch at M1–S22 is a signal peptide. The propeptide occupies N23–R40. The region spanning A41–D86 is the Gla domain. 4-carboxyglutamate is present on residues E46, E47, E54, E56, E59, E60, E65, E66, E69, and E72. An intrachain disulfide couples C57 to C62. Residues D86–E122 form the EGF-like 1; calcium-binding domain. 11 disulfides stabilise this stretch: C90/C101, C95/C110, C112/C121, C129/C140, C136/C149, C151/C164, C172/C329, C216/C221, C236/C252, C377/C391, and C402/C430. S92 carries an O-linked (Hex...) serine glycan. In terms of domain architecture, EGF-like 2 spans C129–C164. A propeptide spans R182–R209 (activation peptide). In terms of domain architecture, Peptidase S1 spans I210–R454. H251 serves as the catalytic Charge relay system. N-linked (GlcNAc...) asparagine glycosylation occurs at N254. The Charge relay system role is filled by D309. The active-site Charge relay system is the S406.

This sequence belongs to the peptidase S1 family. Snake venom subfamily. Heterodimer of a light and a heavy chains; disulfide-linked. Is associated with pseutarin-C non-catalytic subunit (AC Q7SZN0) in a non-covalent manner. In terms of processing, gamma-carboxyglutamate residues are formed by vitamin K dependent carboxylation. These residues are essential for the binding of calcium. Expressed by the venom gland.

It is found in the secreted. The catalysed reaction is Selective cleavage of Arg-|-Thr and then Arg-|-Ile bonds in prothrombin to form thrombin.. Its activity is regulated as follows. Activated by calcium and negatively charged phospholipids. Its function is as follows. Snake prothrombin activator that attacks the hemostatic system of prey. This non-catalytic subunit is functionally similar to blood coagulation factor V. It serves as a critical cofactor for the prothrombinase activity of the catalytic subunit, which is similar to the blood coagulation factor X. The complex converts prothrombin to thrombin by sequential cleavage at two positions, Arg-320 followed by Arg-271. Cleavage at Arg-320 produces an active intermediate known as meizothrombin. Meizothrombin is the 'second' substrate for prothrombinase, and it docks in an altered manner to present the second cleavage site (271). Cleavage at Arg-271 releases active thrombin from its pro-fragment. This order of events is reversed if the protease component of prothrombinase is used on its own, suggesting that the 271 site is inherently more accessible to proteolysis. The complex converts prothrombin to thrombin in presence but also in the absence of membrane. This is Venom prothrombin activator pseutarin-C catalytic subunit from Pseudonaja textilis (Eastern brown snake).